We begin with the raw amino-acid sequence, 373 residues long: Spore germination protein KB (373 aa).

The next 10 helical transmembrane spans lie at 11 to 31, 37 to 57, 78 to 98, 105 to 125, 143 to 163, 185 to 205, 219 to 239, 269 to 289, 306 to 326, and 338 to 358; these read LFVM…PGSM, WIAV…YQGI, LSWL…ARVL, LLTF…LMVV, LLFG…IVSG, VFTQ…MIFP, IAMA…ISVL, VFFM…YLYA, LAYP…TNFS, and LYIH…VAVW.

This sequence belongs to the amino acid-polyamine-organocation (APC) superfamily. Spore germination protein (SGP) (TC 2.A.3.9) family.

It localises to the cell membrane. In terms of biological role, involved in the germination response to the combination of glucose, fructose, L-asparagine, and KCl. The chain is Spore germination protein KB (gerKB) from Bacillus subtilis (strain 168).